Reading from the N-terminus, the 149-residue chain is Limonene-1,2-epoxide hydrolase (149 aa).

Residue aspartate 101 is the Proton donor of the active site. Aspartate 132 acts as the Proton acceptor in catalysis.

It belongs to the limonene-1,2-epoxide hydrolase family. In terms of assembly, monomer.

It carries out the reaction limonene 1,2-epoxide + H2O = limonene-1,2-diol. It participates in terpene metabolism; (4R)-limonene degradation; (1S,4R)-1-hydroxylimonen-2-one from (4R)-limonene: step 2/3. Its function is as follows. Catalyzes the conversion of limonene-1,2-epoxide to limonene-1,2-diol. Can use both the (-) and (+) isomers of limonene-1,2-epoxide as substrates and also has some activity with 1-methylcyclohexene oxide, cyclohexene oxide and indene oxide as substrates. The sequence is that of Limonene-1,2-epoxide hydrolase (limA) from Rhodococcus erythropolis (Arthrobacter picolinophilus).